The sequence spans 376 residues: Chaperone protein DnaJ (376 aa).

Residues 5–70 (DYYEVLGVAR…NKRRMYDSHG (66 aa)) enclose the J domain. The segment at 132–209 (GVERRIEIPT…CHGNGRVEED (78 aa)) adopts a CR-type zinc-finger fold. Zn(2+) is bound by residues C145, C148, C161, C164, C183, C186, C197, and C200. 4 CXXCXGXG motif repeats span residues 145–152 (CGDCDGSG), 161–168 (CNVCHGRG), 183–190 (CHNCGGRG), and 197–204 (CKTCHGNG). Residues 223 to 242 (GDRIRLSGEGEAGPAGTPPG) are disordered.

It belongs to the DnaJ family. In terms of assembly, homodimer. The cofactor is Zn(2+).

It localises to the cytoplasm. In terms of biological role, participates actively in the response to hyperosmotic and heat shock by preventing the aggregation of stress-denatured proteins and by disaggregating proteins, also in an autonomous, DnaK-independent fashion. Unfolded proteins bind initially to DnaJ; upon interaction with the DnaJ-bound protein, DnaK hydrolyzes its bound ATP, resulting in the formation of a stable complex. GrpE releases ADP from DnaK; ATP binding to DnaK triggers the release of the substrate protein, thus completing the reaction cycle. Several rounds of ATP-dependent interactions between DnaJ, DnaK and GrpE are required for fully efficient folding. Also involved, together with DnaK and GrpE, in the DNA replication of plasmids through activation of initiation proteins. In Stenotrophomonas maltophilia (strain R551-3), this protein is Chaperone protein DnaJ.